Here is a 275-residue protein sequence, read N- to C-terminus: Interleukin-2 receptor subunit alpha (275 aa).

A signal peptide spans 1–21; that stretch reads MEPSLLMWRFFVFIVVPGCVT. 2 consecutive Sushi domains span residues 22–81 and 121–186; these read EACH…FCNS and GHCE…KCIS. The Extracellular segment spans residues 22–243; sequence EACHDDPPSL…DTFIFTTEYQ (222 aa). Cystine bridges form between Cys24-Cys64, Cys49-Cys77, and Cys51-Cys79. N-linked (GlcNAc...) asparagine glycosylation occurs at Asn80. Positions 86 to 130 are disordered; that stretch reads KNPVKPVTPGSEEQRERKPTDAQSQTQPPEQADLPGHCEEPPPWE. Residues 121–130 show a composition bias toward basic and acidic residues; that stretch reads GHCEEPPPWE. 2 disulfide bridges follow: Cys123–Cys168 and Cys152–Cys184. The segment at 188–213 is disordered; sequence GANSQAPDEAEPPESTEAPPGSGTFL. The chain crosses the membrane as a helical span at residues 244–262; sequence IAVAGCILLLSSILLLSCL. Residues 263-275 are Cytoplasmic-facing; sequence TWQRRWKKNRRTI.

In terms of assembly, non-covalent dimer of an alpha and a beta subunit. IL2R exists in 3 different forms: a high affinity dimer, an intermediate affinity monomer (beta subunit), and a low affinity monomer (alpha subunit). The high and intermediate affinity forms also associate with a gamma subunit.

The protein resides in the membrane. In terms of biological role, receptor for interleukin-2. The receptor is involved in the regulation of immune tolerance by controlling regulatory T cells (TREGs) activity. TREGs suppress the activation and expansion of autoreactive T-cells. In Ovis aries (Sheep), this protein is Interleukin-2 receptor subunit alpha (IL2RA).